We begin with the raw amino-acid sequence, 318 residues long: Tumor necrosis factor ligand superfamily member 11 (318 aa).

Residues 1-47 are Cytoplasmic-facing; it reads MRRANRDYGKYLRGSEEMGSCPGVPHEGPLHPAPSAPAPAPPPAASR. Residues 13 to 41 are disordered; it reads RGSEEMGSCPGVPHEGPLHPAPSAPAPAP. A compositionally biased stretch (pro residues) spans 31-41; the sequence is HPAPSAPAPAP. Residues 48-68 form a helical; Signal-anchor for type II membrane protein membrane-spanning segment; sequence FMFLALLGLGLGQVVCSIALF. At 69 to 318 the chain is on the extracellular side; sequence LYFRAQMDPN…FGAFKVQDID (250 aa). The region spanning 165 to 314 is the THD domain; that stretch reads PFAHLTINAA…DATYFGAFKV (150 aa). Residues N199 and N264 are each glycosylated (N-linked (GlcNAc...) asparagine).

This sequence belongs to the tumor necrosis factor family. Homotrimer. Interacts with TNFRSF11A and TNFRSF11B. Interacts with FBN1 (via N-terminal domain) in a Ca(+2)-dependent manner. Interacts with TNFAIP6 (via both Link and CUB domains). Post-translationally, the soluble form derives from the membrane form by proteolytic processing. As to expression, highly expressed in thymus and bone tissues.

The protein resides in the cell membrane. The protein localises to the secreted. Cytokine that binds to TNFRSF11B/OPG and to TNFRSF11A/RANK. Osteoclast differentiation and activation factor. Augments the ability of dendritic cells to stimulate naive T-cell proliferation. May be an important regulator of interactions between T-cells and dendritic cells and may play a role in the regulation of the T-cell-dependent immune response. May also play an important role in enhanced bone-resorption in humoral hypercalcemia of malignancy. Induces osteoclastogenesis by activating multiple signaling pathways in osteoclast precursor cells, chief among which is induction of long lasting oscillations in the intracellular concentration of Ca (2+) resulting in the activation of NFATC1, which translocates to the nucleus and induces osteoclast-specific gene transcription to allow differentiation of osteoclasts. During osteoclast differentiation, in a TMEM64 and ATP2A2-dependent manner induces activation of CREB1 and mitochondrial ROS generation necessary for proper osteoclast generation. The polypeptide is Tumor necrosis factor ligand superfamily member 11 (Tnfsf11) (Rattus norvegicus (Rat)).